The primary structure comprises 428 residues: Tryptophan synthase beta chain (428 aa).

The residue at position 100 (Lys-100) is an N6-(pyridoxal phosphate)lysine.

The protein belongs to the TrpB family. Tetramer of two alpha and two beta chains. Requires pyridoxal 5'-phosphate as cofactor.

It carries out the reaction (1S,2R)-1-C-(indol-3-yl)glycerol 3-phosphate + L-serine = D-glyceraldehyde 3-phosphate + L-tryptophan + H2O. Its pathway is amino-acid biosynthesis; L-tryptophan biosynthesis; L-tryptophan from chorismate: step 5/5. The beta subunit is responsible for the synthesis of L-tryptophan from indole and L-serine. This is Tryptophan synthase beta chain from Streptomyces griseus subsp. griseus (strain JCM 4626 / CBS 651.72 / NBRC 13350 / KCC S-0626 / ISP 5235).